The primary structure comprises 104 residues: Small ribosomal subunit protein bS6 (104 aa).

The protein belongs to the bacterial ribosomal protein bS6 family.

Binds together with bS18 to 16S ribosomal RNA. The chain is Small ribosomal subunit protein bS6 from Elusimicrobium minutum (strain Pei191).